A 54-amino-acid polypeptide reads, in one-letter code: Preprotein translocase subunit SecG (54 aa).

The Cytoplasmic portion of the chain corresponds to 1-31 (MSSGSNSGGLMSSAGLVRYFDSEDRDAIAID). A helical membrane pass occupies residues 32 to 53 (PKTVLAFCVLFGVFVQILSLTV). A topological domain (extracellular) is located at residue Ala54.

The protein belongs to the SEC61-beta family. In terms of assembly, component of the protein translocase complex. Heterotrimer consisting of alpha (SecY), beta (SecG) and gamma (SecE) subunits. Can form oligomers of the heterotrimer.

Its subcellular location is the cell membrane. Involved in protein export. The function of the beta subunit is unknown, but it may be involved in stabilization of the trimeric complex. This Halorubrum lacusprofundi (strain ATCC 49239 / DSM 5036 / JCM 8891 / ACAM 34) protein is Preprotein translocase subunit SecG.